A 269-amino-acid chain; its full sequence is Undecaprenyl-diphosphatase (269 aa).

The next 6 helical transmembrane spans lie at 43–63 (KGKVFEIVIQLGAILAVCWEY), 82–102 (FILNLFVAFLPAAIFGLLLHG), 108–128 (LFSSITVACALIVGGFAILLV), 188–208 (ATEFSFFLAIPVMLAATFYDV), 222–242 (MFAVGFITAFLAALVAIKTLI), and 249–269 (DFKGFAYYRIVLGIIVLAYYW).

Belongs to the UppP family.

Its subcellular location is the cell inner membrane. The enzyme catalyses di-trans,octa-cis-undecaprenyl diphosphate + H2O = di-trans,octa-cis-undecaprenyl phosphate + phosphate + H(+). Its function is as follows. Catalyzes the dephosphorylation of undecaprenyl diphosphate (UPP). Confers resistance to bacitracin. This is Undecaprenyl-diphosphatase from Methylobacillus flagellatus (strain ATCC 51484 / DSM 6875 / VKM B-1610 / KT).